The following is a 230-amino-acid chain: Urease accessory protein UreF (230 aa).

This sequence belongs to the UreF family. UreD, UreF and UreG form a complex that acts as a GTP-hydrolysis-dependent molecular chaperone, activating the urease apoprotein by helping to assemble the nickel containing metallocenter of UreC. The UreE protein probably delivers the nickel.

It localises to the cytoplasm. Functionally, required for maturation of urease via the functional incorporation of the urease nickel metallocenter. In Cupriavidus taiwanensis (strain DSM 17343 / BCRC 17206 / CCUG 44338 / CIP 107171 / LMG 19424 / R1) (Ralstonia taiwanensis (strain LMG 19424)), this protein is Urease accessory protein UreF.